The following is a 269-amino-acid chain: Putative pyruvate, phosphate dikinase regulatory protein (269 aa).

147-154 is a binding site for ADP; it reads GVSRTSKT.

The protein belongs to the pyruvate, phosphate/water dikinase regulatory protein family. PDRP subfamily.

The enzyme catalyses N(tele)-phospho-L-histidyl/L-threonyl-[pyruvate, phosphate dikinase] + ADP = N(tele)-phospho-L-histidyl/O-phospho-L-threonyl-[pyruvate, phosphate dikinase] + AMP + H(+). It catalyses the reaction N(tele)-phospho-L-histidyl/O-phospho-L-threonyl-[pyruvate, phosphate dikinase] + phosphate + H(+) = N(tele)-phospho-L-histidyl/L-threonyl-[pyruvate, phosphate dikinase] + diphosphate. Its function is as follows. Bifunctional serine/threonine kinase and phosphorylase involved in the regulation of the pyruvate, phosphate dikinase (PPDK) by catalyzing its phosphorylation/dephosphorylation. In Geotalea daltonii (strain DSM 22248 / JCM 15807 / FRC-32) (Geobacter daltonii), this protein is Putative pyruvate, phosphate dikinase regulatory protein.